Reading from the N-terminus, the 106-residue chain is Small ribosomal subunit protein bS20 (106 aa).

A disordered region spans residues 1-32 (MAQKKPKRNLSALKRHRQSLKRRLRNKAKKSA).

As to quaternary structure, part of the 30S ribosomal subunit.

Functionally, one of the primary rRNA binding proteins, it binds directly to 16S rRNA where it nucleates assembly of the bottom of the body of the 30S subunit, by binding to several RNA helices of the 16S rRNA. The sequence is that of Small ribosomal subunit protein bS20 (rpsT) from Thermus thermophilus (strain ATCC 27634 / DSM 579 / HB8).